Reading from the N-terminus, the 461-residue chain is D-phenylhydantoinase (461 aa).

3 residues coordinate a divalent metal cation: His59, His61, and Lys151. Lys151 carries the post-translational modification N6-carboxylysine. Tyr156 is a binding site for substrate. The a divalent metal cation site is built by His182 and His239. Residue Ser286 coordinates substrate. Asp313 is a binding site for a divalent metal cation. Substrate is bound at residue Asn335.

Belongs to the metallo-dependent hydrolases superfamily. Hydantoinase/dihydropyrimidinase family. Homotetramer. A divalent metal cation is required as a cofactor. Carboxylation allows a single lysine to coordinate two divalent metal cations.

The catalysed reaction is D-5-phenylhydantoin + H2O = N-carbamoyl-D-phenylglycine + H(+). Its function is as follows. Catalyzes the stereospecific hydrolysis of the cyclic amide bond of D-hydantoin derivatives with an aromatic side chains at the 5'-position. Has no activity on dihydropyrimidines. The physiological function is unknown. In Escherichia coli O17:K52:H18 (strain UMN026 / ExPEC), this protein is D-phenylhydantoinase.